The primary structure comprises 77 residues: Sec-independent protein translocase protein TatA (77 aa).

A helical membrane pass occupies residues 1–21; the sequence is MGSLSIWHWIVVIAVVLLLFG. Positions 43–60 are enriched in basic and acidic residues; the sequence is MQDDDKAPEKTEPVKSID. Residues 43–77 form a disordered region; it reads MQDDDKAPEKTEPVKSIDHGATPSATRTDVGSKAV.

The protein belongs to the TatA/E family. In terms of assembly, the Tat system comprises two distinct complexes: a TatABC complex, containing multiple copies of TatA, TatB and TatC subunits, and a separate TatA complex, containing only TatA subunits. Substrates initially bind to the TatABC complex, which probably triggers association of the separate TatA complex to form the active translocon.

It is found in the cell inner membrane. Part of the twin-arginine translocation (Tat) system that transports large folded proteins containing a characteristic twin-arginine motif in their signal peptide across membranes. TatA could form the protein-conducting channel of the Tat system. This Bradyrhizobium sp. (strain BTAi1 / ATCC BAA-1182) protein is Sec-independent protein translocase protein TatA.